We begin with the raw amino-acid sequence, 303 residues long: Hemolysin E (303 aa).

A disulfide bridge connects residues cysteine 87 and cysteine 285. Residues 179–199 (AGAAAGIVAGPFGLIISYSIA) form a helical membrane-spanning segment.

It belongs to the hemolysin E family. Monomer and oligomer. In periplasm, it is present as a monomer, while in outer membrane vesicles, it oligomerizes to form a pore structure that is active. The pore is formed by a dodecamer. In terms of processing, in periplasm, it forms a disulfide bond, which prevents the oligomerization. In outer membrane vesicles, the redox status prevents formation of the disulfide bond, leading to oligomerization and pore formation.

It is found in the secreted. Its subcellular location is the periplasm. The protein resides in the host cell membrane. Its function is as follows. Toxin, which has some hemolytic activity towards mammalian cells. Acts by forming a pore-like structure upon contact with mammalian cells. The protein is Hemolysin E (hlyE) of Salmonella paratyphi A (strain ATCC 9150 / SARB42).